Reading from the N-terminus, the 424-residue chain is D-inositol 3-phosphate glycosyltransferase (424 aa).

His20 is a binding site for 1D-myo-inositol 3-phosphate. Residues 26–27 (QP) and Gly34 each bind UDP-N-acetyl-alpha-D-glucosamine. 1D-myo-inositol 3-phosphate-binding positions include 31–36 (DAGGMN), Lys89, Tyr122, Thr146, and Arg166. Residues Arg240, Lys245, and Met306 each contribute to the UDP-N-acetyl-alpha-D-glucosamine site. Positions 315, 316, and 318 each coordinate Mg(2+). Positions 328 and 336 each coordinate UDP-N-acetyl-alpha-D-glucosamine. Thr342 serves as a coordination point for Mg(2+).

Belongs to the glycosyltransferase group 1 family. MshA subfamily. In terms of assembly, homodimer.

It catalyses the reaction 1D-myo-inositol 3-phosphate + UDP-N-acetyl-alpha-D-glucosamine = 1D-myo-inositol 2-acetamido-2-deoxy-alpha-D-glucopyranoside 3-phosphate + UDP + H(+). Its function is as follows. Catalyzes the transfer of a N-acetyl-glucosamine moiety to 1D-myo-inositol 3-phosphate to produce 1D-myo-inositol 2-acetamido-2-deoxy-glucopyranoside 3-phosphate in the mycothiol biosynthesis pathway. The protein is D-inositol 3-phosphate glycosyltransferase of Kribbella flavida (strain DSM 17836 / JCM 10339 / NBRC 14399).